Reading from the N-terminus, the 209-residue chain is MRVEYGSVEKDGSADLDVDWLADGWVALLRRWLADAEAAGIAEPNAIVLGTVDAAGRPVTRTVLCKSVDDTGITFFTNYGSAKGEDLASTPYASATFPWFALGRQVHVRGPVTKVSAEETADYWSKRPRGSQLGAWASQQSRPIASRAELLDQLAEVTERFADHDTVPVPPDWGGYRITAEVVEFWQGRESRVHNRIRVHDGRIERLQP.

Substrate is bound by residues 2 to 5 (RVEY) and lysine 66. FMN contacts are provided by residues 61 to 66 (RTVLCK), 76 to 77 (FT), lysine 83, and glutamine 105. The substrate site is built by tyrosine 123, arginine 127, and serine 131. Residues 140–141 (QS) and tryptophan 186 contribute to the FMN site. Residue 192–194 (RVH) participates in substrate binding. Arginine 196 contacts FMN.

Belongs to the pyridoxamine 5'-phosphate oxidase family. In terms of assembly, homodimer. FMN serves as cofactor.

The enzyme catalyses pyridoxamine 5'-phosphate + O2 + H2O = pyridoxal 5'-phosphate + H2O2 + NH4(+). It carries out the reaction pyridoxine 5'-phosphate + O2 = pyridoxal 5'-phosphate + H2O2. The protein operates within cofactor metabolism; pyridoxal 5'-phosphate salvage; pyridoxal 5'-phosphate from pyridoxamine 5'-phosphate: step 1/1. It participates in cofactor metabolism; pyridoxal 5'-phosphate salvage; pyridoxal 5'-phosphate from pyridoxine 5'-phosphate: step 1/1. In terms of biological role, catalyzes the oxidation of either pyridoxine 5'-phosphate (PNP) or pyridoxamine 5'-phosphate (PMP) into pyridoxal 5'-phosphate (PLP). This is Pyridoxine/pyridoxamine 5'-phosphate oxidase from Mycobacterium sp. (strain JLS).